The primary structure comprises 347 residues: DNA-directed RNA polymerase subunit alpha (347 aa).

The alpha N-terminal domain (alpha-NTD) stretch occupies residues 1-230; sequence MFKGFQKPKR…DHMTIFINFE (230 aa). Residues 247–347 form an alpha C-terminal domain (alpha-CTD) region; it reads MNEVLNRSVE…EDDGQDQIGE (101 aa). Positions 320-347 are disordered; the sequence is GRLVAPPPSAGGGPDFGPEDDGQDQIGE. Residues 336 to 347 are compositionally biased toward acidic residues; it reads GPEDDGQDQIGE.

The protein belongs to the RNA polymerase alpha chain family. In terms of assembly, homodimer. The RNAP catalytic core consists of 2 alpha, 1 beta, 1 beta' and 1 omega subunit. When a sigma factor is associated with the core the holoenzyme is formed, which can initiate transcription.

It catalyses the reaction RNA(n) + a ribonucleoside 5'-triphosphate = RNA(n+1) + diphosphate. Functionally, DNA-dependent RNA polymerase catalyzes the transcription of DNA into RNA using the four ribonucleoside triphosphates as substrates. This chain is DNA-directed RNA polymerase subunit alpha, found in Solibacter usitatus (strain Ellin6076).